Reading from the N-terminus, the 199-residue chain is Nucleoside triphosphate pyrophosphatase (199 aa).

Asp-72 acts as the Proton acceptor in catalysis.

This sequence belongs to the Maf family. The cofactor is a divalent metal cation.

It is found in the cytoplasm. The enzyme catalyses a ribonucleoside 5'-triphosphate + H2O = a ribonucleoside 5'-phosphate + diphosphate + H(+). It carries out the reaction a 2'-deoxyribonucleoside 5'-triphosphate + H2O = a 2'-deoxyribonucleoside 5'-phosphate + diphosphate + H(+). In terms of biological role, nucleoside triphosphate pyrophosphatase. May have a dual role in cell division arrest and in preventing the incorporation of modified nucleotides into cellular nucleic acids. In Synechococcus elongatus (strain ATCC 33912 / PCC 7942 / FACHB-805) (Anacystis nidulans R2), this protein is Nucleoside triphosphate pyrophosphatase.